The primary structure comprises 337 residues: 2-oxoglutarate-dependent ethylene/succinate-forming enzyme (337 aa).

Positions Gly166–Pro286 constitute a Fe2OG dioxygenase domain. Fe cation is bound by residues His189 and His268.

Belongs to the iron/ascorbate-dependent oxidoreductase family. As to quaternary structure, monomer. Fe(2+) is required as a cofactor.

The enzyme catalyses 2-oxoglutarate + O2 + 2 H(+) = ethene + 3 CO2 + H2O. It catalyses the reaction L-arginine + 2-oxoglutarate + O2 = guanidine + L-glutamate 5-semialdehyde + succinate + CO2. The protein operates within alkene biosynthesis; ethylene biosynthesis via 2-oxoglutarate. Its function is as follows. Simultaneously catalyzes two reactions, namely formation of ethylene and of succinate from 2-oxoglutarate. The protein is 2-oxoglutarate-dependent ethylene/succinate-forming enzyme (efe) of Pseudomonas syringae pv. pisi.